The chain runs to 492 residues: Ferruginol synthase (492 aa).

A helical membrane pass occupies residues 1 to 21 (METIALLAALFFIALTCFLTS). The Cytoplasmic segment spans residues 22–492 (GRRRNLPPGP…VPLKIIPLRP (471 aa)). A heme-binding site is contributed by Cys436.

It belongs to the cytochrome P450 family. The cofactor is heme.

The protein localises to the endoplasmic reticulum membrane. The catalysed reaction is abieta-8,11,13-triene + reduced [NADPH--hemoprotein reductase] + O2 = ferruginol + oxidized [NADPH--hemoprotein reductase] + H2O + H(+). The protein operates within secondary metabolite biosynthesis; terpenoid biosynthesis. Its function is as follows. Cytochrome P450 enzyme (CYP) which catalyzes a unique two-electron oxidation cascade on abieta-8,11,13-triene to produce ferruginol, an intermediate in tanshinone biosynthesis. This chain is Ferruginol synthase, found in Isodon rubescens (Rabdosia rubescens).